Here is a 428-residue protein sequence, read N- to C-terminus: UPF0229 protein YeaH (428 aa).

Residues 78-90 (GNDHFIQNDRIER) are compositionally biased toward basic and acidic residues. Residues 78-111 (GNDHFIQNDRIERPQGGGGGGSGSGQGQASQDGE) form a disordered region. Residues 92-103 (QGGGGGGSGSGQ) are compositionally biased toward gly residues.

Belongs to the UPF0229 family.

The sequence is that of UPF0229 protein YeaH from Salmonella choleraesuis (strain SC-B67).